Here is a 252-residue protein sequence, read N- to C-terminus: Outer membrane protein P1 (252 aa).

A signal peptide spans M1–A23.

This sequence belongs to the Coxiella porin P1 (CPP1) (TC 1.B.43) family. As to quaternary structure, may form trimers.

Its subcellular location is the cell outer membrane. Its function is as follows. Able to form a pore in lipid bilayers. This chain is Outer membrane protein P1 (ompP1), found in Coxiella burnetii (strain RSA 493 / Nine Mile phase I).